The following is a 273-amino-acid chain: MQWNVPKTVFRLAHRTCMEPHKAGLLGHCQNMKGPLLLYTLESRVVVVQGPQKRWLHLPTAQCVAKERKPFTAVQSQPGVFHHKQWEQDILSKRVLSSSATSSGPPSEKKEDPDPLQDRSISLYQRFKKTFRQYGKVLIPVHLITSAVWFGTFYYAAMKGVNVVPFLELIGLPDSIVNILKNSQSGNALTAYALFKIATPARYTVTLGGTSFTVKYLRSRGYMSTPPPVKEYLQDKMEETKELLTEKMEETKDRLTEKLQETKGKVSLKKKVE.

The segment covering 97-106 (SSSATSSGPP) has biased composition (low complexity). Positions 97 to 116 (SSSATSSGPPSEKKEDPDPL) are disordered. Over residues 107–116 (SEKKEDPDPL) the composition is skewed to basic and acidic residues. The DUF1279 domain maps to 118 to 230 (DRSISLYQRF…GYMSTPPPVK (113 aa)). The chain crosses the membrane as a helical span at residues 137–157 (VLIPVHLITSAVWFGTFYYAA). Positions 230–269 (KEYLQDKMEETKELLTEKMEETKDRLTEKLQETKGKVSLK) form a coiled coil. The disordered stretch occupies residues 247 to 273 (KMEETKDRLTEKLQETKGKVSLKKKVE).

The protein belongs to the FAM210 family. In terms of assembly, interacts with ATAD3A.

It is found in the membrane. The protein resides in the mitochondrion. The protein localises to the cytoplasm. Its function is as follows. May play a role in the structure and strength of both muscle and bone. This is Protein FAM210A (FAM210A) from Bos taurus (Bovine).